The primary structure comprises 582 residues: Trans-activating transcriptional regulatory protein (582 aa).

Residues 101-131 (QPVVEQPSPSSAYHAESFEHSAGVNQPSATG) form a disordered region.

It belongs to the nucleopolyhedrovirus IE-1 protein family. In terms of assembly, homodimer. Interacts with helicase and LEF-3. In terms of processing, phosphorylated.

Its subcellular location is the host nucleus. Functionally, regulatory transcriptional protein, which trans-activates gene expression from early baculovirus promoters. Can also trans-activate its own promoter, suggesting an autoregulation during infection of host cells. Also promotes viral DNA genome replication via the N-terminal region. The sequence is that of Trans-activating transcriptional regulatory protein (IE1) from Autographa californica nuclear polyhedrosis virus (AcMNPV).